The chain runs to 454 residues: Protein IQ-DOMAIN 1 (454 aa).

Positions 103–113 are calmodulin-binding; it reads GKSKEEAAAIL. In terms of domain architecture, IQ spans 107–136; sequence EEAAAILIQSTFRGHLARRESQVMRGQERL. The disordered stretch occupies residues 272 to 454; sequence WESSEKEQNT…KGVLKAERTP (183 aa). The segment covering 280–328 has biased composition (polar residues); the sequence is NTTNNDNSSVKNSTNRNSQGGETAKSSNRNKLNSSTKPNTPSASSTATR. The segment covering 343–356 has biased composition (basic and acidic residues); that stretch reads KSSDDEAKSSERNR. Positions 371 to 388 are enriched in polar residues; that stretch reads LSSSTARRSSNLIPTTKS. Residues 397–412 are compositionally biased toward low complexity; the sequence is TSSRVAVTTSTTEESS. The Nuclear localization signal motif lies at 421–428; the sequence is KKRLSTSA. Positions 442 to 454 are enriched in basic and acidic residues; sequence KVEKGVLKAERTP.

Belongs to the IQD family. As to quaternary structure, binds to multiple calmodulin (CaM) in the presence of Ca(2+)(e.g. CaM1 and CaM2) and CaM-like (e.g. CML8 and CML9) proteins. Interacts with KLCR1. Expressed in roots, flowers, stems, siliques, inflorescence stems and whole shoots. Restricted to the vascular bundles.

It localises to the nucleus. Its subcellular location is the nucleolus. The protein resides in the cytoplasm. It is found in the cytoskeleton. Its function is as follows. May be involved in cooperative interactions with calmodulins or calmodulin-like proteins. Modulates expression of glucosinolate pathway genes. May associate with nucleic acids and regulate gene expression at the transcriptional or post-transcriptional level. Recruits KLCR1 and calmodulin proteins to microtubules, thus being a potential scaffold in cellular signaling and trafficking. The protein is Protein IQ-DOMAIN 1 of Arabidopsis thaliana (Mouse-ear cress).